We begin with the raw amino-acid sequence, 205 residues long: MEGNGPAAVHYQPASPPRDACVYSSCYCEENIWKLCEYIKNHDQYPLEECYAVFISNERKMIPIWKQQARPGDGPVIWDYHVVLLHVSSGGQNFIYDLDTVLPFPCLFDTYVEDAFKSDDDIHPQFRRKFRVIRADSYLKNFASDRSHMKDSSGNWREPPPPYPCIETGDSKMNLNDFISMDPKVGWGAVYTLSEFTHRFGSKNC.

Catalysis depends on residues C28, H81, and D97.

It belongs to the NTAQ1 family. In terms of assembly, monomer.

The protein resides in the cytoplasm. Its subcellular location is the cytosol. It localises to the nucleus. It catalyses the reaction N-terminal L-glutaminyl-[protein] + H2O = N-terminal L-glutamyl-[protein] + NH4(+). Functionally, mediates the side-chain deamidation of N-terminal glutamine residues to glutamate, an important step in N-end rule pathway of protein degradation. Conversion of the resulting N-terminal glutamine to glutamate renders the protein susceptible to arginylation, polyubiquitination and degradation as specified by the N-end rule. Does not act on substrates with internal or C-terminal glutamine and does not act on non-glutamine residues in any position. Does not deaminate acetylated N-terminal glutamine. With the exception of proline, all tested second-position residues on substrate peptides do not greatly influence the activity. In contrast, a proline at position 2, virtually abolishes deamidation of N-terminal glutamine. The sequence is that of Protein N-terminal glutamine amidohydrolase from Homo sapiens (Human).